The primary structure comprises 568 residues: Periplasmic trehalase (568 aa).

Residues 1–39 form the signal peptide; the sequence is MPYATARSGDVMSSAAPPCCTSLLGLSLSMFVAPGTLTA. Residues Arg169, 176–177, Asn213, 222–224, 294–296, and Gly327 each bind substrate; these read WD, RSQ, and RPE. Catalysis depends on proton donor/acceptor residues Asp329 and Glu511. Substrate is bound at residue Glu526.

It belongs to the glycosyl hydrolase 37 family.

The protein localises to the periplasm. It carries out the reaction alpha,alpha-trehalose + H2O = alpha-D-glucose + beta-D-glucose. In terms of biological role, provides the cells with the ability to utilize trehalose at high osmolarity by splitting it into glucose molecules that can subsequently be taken up by the phosphotransferase-mediated uptake system. The sequence is that of Periplasmic trehalase from Xanthomonas axonopodis pv. citri (strain 306).